Reading from the N-terminus, the 363-residue chain is tRNA (guanine(26)-N(2))-dimethyltransferase (363 aa).

Residues 5–352 (VLRREGGVKF…GEYGEVLMAF (348 aa)) enclose the Trm1 methyltransferase domain. Residues R40, R67, D85, D111, and A112 each contribute to the S-adenosyl-L-methionine site.

Belongs to the class I-like SAM-binding methyltransferase superfamily. Trm1 family.

It carries out the reaction guanosine(26) in tRNA + 2 S-adenosyl-L-methionine = N(2)-dimethylguanosine(26) in tRNA + 2 S-adenosyl-L-homocysteine + 2 H(+). In terms of biological role, dimethylates a single guanine residue at position 26 of a number of tRNAs using S-adenosyl-L-methionine as donor of the methyl groups. This is tRNA (guanine(26)-N(2))-dimethyltransferase from Pyrobaculum aerophilum (strain ATCC 51768 / DSM 7523 / JCM 9630 / CIP 104966 / NBRC 100827 / IM2).